The chain runs to 662 residues: Interferon-induced GTP-binding protein Mx1 (662 aa).

Met1 bears the N-acetylmethionine; in Interferon-induced GTP-binding protein Mx1; alternate mark. The Dynamin-type G domain occupies 67–340 (DLALPAIAVI…LITHICKSLP (274 aa)). The G1 motif stretch occupies residues 77–84 (GDQSSGKS). Position 77 to 84 (77 to 84 (GDQSSGKS)) interacts with GTP. The tract at residues 102–104 (VTR) is G2 motif. The segment at 178-181 (DLPG) is G3 motif. GTP is bound by residues 178 to 182 (DLPGI) and 247 to 250 (TKPD). Residues 247 to 250 (TKPD) are G4 motif. Residues 279–282 (KCRG) form a G5 motif region. Residues 341–366 (LLENQIKETHQRITEELQKYGVDIPE) are bundle signaling element (BSE). The middle domain stretch occupies residues 366–533 (EDENEKMFFL…HFQMEQIVYC (168 aa)). The interval 367-632 (DENEKMFFLI…KDTYSWLLKE (266 aa)) is stalk. The segment at 554–557 (KKKK) is critical for lipid-binding. Positions 574–662 (MEEIFQHLMA…ARRRLAQFPG (89 aa)) constitute a GED domain.

It belongs to the TRAFAC class dynamin-like GTPase superfamily. Dynamin/Fzo/YdjA family. In terms of assembly, homotetramer. Oligomerizes into multimeric filamentous or ring-like structures by virtue of its stalk domain. Oligomerization is critical for GTPase activity, protein stability, and recognition of viral target structures. Interacts with TRPC1, TRPC3, TRPC4, TRPC5, TRPC6 and TRPC7. Interacts with HSPA5. Interacts with DDX39A and DDX39B. Interacts with TUBB/TUBB5. The GTP-bound form interacts (via C-terminus) with THOV P5 protein. The GTP-bound form interacts with LACV protein N. Interacts with CCHFV protein N. ISGylated.

The protein localises to the cytoplasm. Its subcellular location is the endoplasmic reticulum membrane. The protein resides in the perinuclear region. It is found in the nucleus. In terms of biological role, interferon-induced dynamin-like GTPase with antiviral activity against a wide range of RNA viruses and some DNA viruses. Its target viruses include negative-stranded RNA viruses and HBV through binding and inactivation of their ribonucleocapsid. May also antagonize reoviridae and asfarviridae replication. Inhibits thogoto virus (THOV) replication by preventing the nuclear import of viral nucleocapsids. Inhibits La Crosse virus (LACV) replication by sequestering viral nucleoprotein in perinuclear complexes, preventing genome amplification, budding, and egress. Inhibits influenza A virus (IAV) replication by decreasing or delaying NP synthesis and by blocking endocytic traffic of incoming virus particles. Enhances ER stress-mediated cell death after influenza virus infection. May regulate the calcium channel activity of TRPCs. The protein is Interferon-induced GTP-binding protein Mx1 (MX1) of Homo sapiens (Human).